Reading from the N-terminus, the 664-residue chain is Xyloglucan-specific galacturonosyltransferase 1 (664 aa).

Over residues 1–21 the composition is skewed to basic residues; it reads MSLSKHLQKLVHKRESKKQPN. The interval 1-49 is disordered; sequence MSLSKHLQKLVHKRESKKQPNKKMPVSVSKLRRPRTSKKTETGNPEKTL. Topologically, residues 1–71 are cytoplasmic; the sequence is MSLSKHLQKL…IFSARSFLYR (71 aa). Residues 72 to 92 form a helical; Signal-anchor for type II membrane protein membrane-spanning segment; it reads VPLTILFLFLIYLWSTSTTVI. At 93-664 the chain is on the lumenal side; that stretch reads SGNVVHICIS…SLFKKIAKTV (572 aa). Residues Asn126, Asn158, Asn175, Asn181, Asn355, Asn379, and Asn522 are each glycosylated (N-linked (GlcNAc...) asparagine).

The protein belongs to the glycosyltransferase 47 family. In terms of tissue distribution, root hair specific. Expressed in roots and young leaves.

The protein resides in the golgi apparatus membrane. Xyloglucan-specific galacturonosyltransferase that forms the beta-D-galactosyluronic acid-(1-&gt;2)-alpha-D-xylosyl linkage. Required for root hair development probably by providing important acidic xyloglucans. The polypeptide is Xyloglucan-specific galacturonosyltransferase 1 (Arabidopsis thaliana (Mouse-ear cress)).